We begin with the raw amino-acid sequence, 430 residues long: Delta-aminolevulinic acid dehydratase 1, chloroplastic (430 aa).

The transit peptide at 1–52 directs the protein to the chloroplast; it reads MATTPIFNASCSFPSTRGIDCKSYIGLRSNVSKVSVASSRIATSQRRNLVVR. A compositionally biased stretch (pro residues) spans 82–91; the sequence is EAPPVPPKPA. The disordered stretch occupies residues 82–101; the sequence is EAPPVPPKPAAPVGTPIIKP. Lys-298 acts as the Schiff-base intermediate with substrate in catalysis. Arg-308 and Lys-320 together coordinate 5-aminolevulinate. Glu-336 provides a ligand contact to Mg(2+). The active-site Schiff-base intermediate with substrate is Lys-351. The 5-aminolevulinate site is built by Ser-377 and Tyr-416.

This sequence belongs to the ALAD family. In terms of assembly, homooctamer. It depends on Mg(2+) as a cofactor. As to expression, highly expressed in cotyledons during dark-to-light transition.

The protein resides in the plastid. It is found in the chloroplast. The catalysed reaction is 2 5-aminolevulinate = porphobilinogen + 2 H2O + H(+). Its pathway is porphyrin-containing compound metabolism; protoporphyrin-IX biosynthesis; coproporphyrinogen-III from 5-aminolevulinate: step 1/4. It participates in porphyrin-containing compound metabolism; chlorophyll biosynthesis. In terms of biological role, catalyzes an early step in the biosynthesis of tetrapyrroles. Binds two molecules of 5-aminolevulinate per subunit, each at a distinct site, and catalyzes their condensation to form porphobilinogen. This is Delta-aminolevulinic acid dehydratase 1, chloroplastic (HEMB1) from Arabidopsis thaliana (Mouse-ear cress).